The primary structure comprises 882 residues: Valine--tRNA ligase (882 aa).

Positions 42–52 match the 'HIGH' region motif; that stretch reads PNVTGKLHLGH. The 'KMSKS' region signature appears at 522 to 526; sequence KMSKS. K525 serves as a coordination point for ATP. A coiled-coil region spans residues 849–873; the sequence is KIEIEKKKYESYCKQYKKLLESKNN.

Belongs to the class-I aminoacyl-tRNA synthetase family. ValS type 1 subfamily. In terms of assembly, monomer.

It is found in the cytoplasm. It catalyses the reaction tRNA(Val) + L-valine + ATP = L-valyl-tRNA(Val) + AMP + diphosphate. Its function is as follows. Catalyzes the attachment of valine to tRNA(Val). As ValRS can inadvertently accommodate and process structurally similar amino acids such as threonine, to avoid such errors, it has a 'posttransfer' editing activity that hydrolyzes mischarged Thr-tRNA(Val) in a tRNA-dependent manner. This Onion yellows phytoplasma (strain OY-M) protein is Valine--tRNA ligase.